Reading from the N-terminus, the 170-residue chain is uncharacterized protein (170 aa).

An N-acetyltransferase domain is found at 8–167 (LLIREFEFKD…DEYYYAILEE (160 aa)).

This sequence belongs to the acetyltransferase family.

This is an uncharacterized protein from Bacillus subtilis (strain 168).